The chain runs to 56 residues: Sperm protamine P1 (56 aa).

A disordered region spans residues 1-56; it reads RLSRRRVYSIGGRRRRRRRRSRGRRGRRRGRRRGRRRGRRRGRRRRRRRGGRRRRR.

P2 is phosphorylated in immature sperm. It is dephosphorylated in mature sperm allowing a stronger interaction with DNA. In terms of tissue distribution, testis.

It is found in the nucleus. The protein localises to the chromosome. In terms of biological role, protamines substitute for histones in the chromatin of sperm during the haploid phase of spermatogenesis. They compact sperm DNA into a highly condensed, stable and inactive complex. Octopus spermiogenesis is characterized by a double nuclear protein transition: Histones are first replaced by P1, which allows the chromatin to adopt a shape that is not as relaxed as with histones. The majority of P1 is later replaced by P2, forming a compact chromatin. P2 is the main protamine of sperm. This Octopus vulgaris (Common octopus) protein is Sperm protamine P1.